The chain runs to 224 residues: Ribose-5-phosphate isomerase A (224 aa).

Substrate is bound by residues 26–29, 81–84, and 94–97; these read TGST, DGAD, and KGGG. Catalysis depends on Glu103, which acts as the Proton acceptor. Lys121 is a binding site for substrate.

It belongs to the ribose 5-phosphate isomerase family. In terms of assembly, homodimer.

The catalysed reaction is aldehydo-D-ribose 5-phosphate = D-ribulose 5-phosphate. The protein operates within carbohydrate degradation; pentose phosphate pathway; D-ribose 5-phosphate from D-ribulose 5-phosphate (non-oxidative stage): step 1/1. Catalyzes the reversible conversion of ribose-5-phosphate to ribulose 5-phosphate. In Listeria monocytogenes serovar 1/2a (strain ATCC BAA-679 / EGD-e), this protein is Ribose-5-phosphate isomerase A.